Consider the following 142-residue polypeptide: Large-conductance mechanosensitive channel (142 aa).

The next 3 membrane-spanning stretches (helical) occupy residues 10–30 (FAVKGNVIDLAVGVIIGGAFG), 40–60 (LIMPVVGLVFGKLDFSNLFIV), and 86–106 (GNFITVAVNFVILAFIIFVMV).

Belongs to the MscL family. Homopentamer.

The protein localises to the cell inner membrane. Channel that opens in response to stretch forces in the membrane lipid bilayer. May participate in the regulation of osmotic pressure changes within the cell. This is Large-conductance mechanosensitive channel from Acidovorax ebreus (strain TPSY) (Diaphorobacter sp. (strain TPSY)).